A 339-amino-acid polypeptide reads, in one-letter code: Serpentine receptor class alpha-24 (339 aa).

7 helical membrane passes run 26-46 (ITVKMSSVLVVTVILLSYYFA), 65-82 (LILLVCLLNSIIHQTTML), 112-132 (ELFVYYLTTYFSTYSVFSLAF), 151-171 (VSIFLLFIQLIFTLGTYYVGL), 199-219 (FRTLIMGICIIVTVFVYYLSV), 248-268 (VCILIVLQFACILISSLGVNY), and 284-304 (LAPFFVGVTYANLCLPLVIHC).

Belongs to the nematode receptor-like protein sra family.

The protein localises to the membrane. This chain is Serpentine receptor class alpha-24 (sra-24), found in Caenorhabditis elegans.